A 667-amino-acid polypeptide reads, in one-letter code: YTH domain-containing protein ECT2 (667 aa).

Disordered regions lie at residues 264-305 (QRPV…PSSV) and 379-398 (NELN…GNLD). Positions 267–285 (VSGSGVASSYSKSSTVPSS) are enriched in low complexity. The segment covering 286 to 305 (RNQNYRSNSHYTSVHQPSSV) has biased composition (polar residues). Residues 442 to 579 (AMFFIIKSYS…EQGLKIVKIF (138 aa)) enclose the YTH domain. Residues 448-450 (KSY), D454, 464-465 (WA), N497, W521, W526, and W534 contribute to the RNA site. The interval 606–667 (KAKQTQKQVS…VTGDVVANGC (62 aa)) is disordered. Positions 614–627 (VSEEKVTDEKKESA) are enriched in basic and acidic residues. The segment covering 628–639 (TAESASKESPAA) has biased composition (low complexity).

As to quaternary structure, interacts (via C-terminus) with CIPK1. Expressed in the shoot apex, at the sites of leaf formation, and in emerging leaves. Highly expressed in rapidly developing tissues.

Its subcellular location is the cytoplasm. It localises to the nucleus. Its function is as follows. Specifically recognizes and binds N6-methyladenosine (m6A)-containing RNAs, and regulates mRNA stability. M6A is a modification present at internal sites of mRNAs and some non-coding RNAs and plays a role in mRNA stability and processing. Binds preferentially in the 3'UTRs of target genes. May play dual roles in regulating 3'UTR processing in the nucleus and facilitating mRNA stability in the cytoplasm. Required for the correct timing of leaf formation and normal leaf morphology. Functions redundantly with ECT3. Required for proper trichome branching and morphology. Controls trichome morphology by binding transcripts related to trichome morphogenesis and affecting their stability. This is YTH domain-containing protein ECT2 from Arabidopsis thaliana (Mouse-ear cress).